Reading from the N-terminus, the 656-residue chain is Receptor-type tyrosine-protein phosphatase R (656 aa).

The N-terminal stretch at 1–23 is a signal peptide; the sequence is MRRAVGFPALCLLLNLHAAGCFS. The O-linked (Xyl...) (chondroitin sulfate) serine glycan is linked to S23. The Extracellular portion of the chain corresponds to 24–226; the sequence is RNNDHFLAIR…EADKIWSKEG (203 aa). N128 is a glycosylation site (N-linked (GlcNAc...) asparagine). A helical transmembrane segment spans residues 227-247; that stretch reads FYAVVIFLSIFIIIVTCLMII. Residues 248-656 are Cytoplasmic-facing; that stretch reads YRLKERLQLS…ESRLSPETVE (409 aa). Positions 269 to 289 are disordered; that stretch reads HLSPIARQQAQSEAKTTHSMV. S271 carries the post-translational modification Phosphoserine. The span at 274–289 shows a compositional bias: polar residues; the sequence is ARQQAQSEAKTTHSMV. Residue S338 is modified to Phosphoserine; by PKA. Residues 392-646 enclose the Tyrosine-protein phosphatase domain; sequence LQSEFMEIPM…EFVHHALCLF (255 aa). Residues D553, 587-593, and Q631 each bind substrate; that span reads CSAGIGR. Residue C587 is the Phosphocysteine intermediate of the active site.

Belongs to the protein-tyrosine phosphatase family. Receptor class 7 subfamily. In terms of assembly, interacts with MAPKs. As to expression, expressed in the heart, brain, spleen, lung, liver, skeletal muscle, kidney and testis. Isoform alpha is expressed throughout the granular layer of the cerebellar but not within the Purkinje cells, also in the villi of the ileum and jejunum and both the villi and crypts of the duodenum. Isoform beta is expressed only in the Purkinje cells. Isoform gamma is expressed throughout the brain, the villi and crypts of the duodenum, jejunum and ileum and expressed at low levels in the proximal colon.

Its subcellular location is the cell membrane. The protein resides in the cytoplasm. The enzyme catalyses O-phospho-L-tyrosyl-[protein] + H2O = L-tyrosyl-[protein] + phosphate. Functionally, sequesters mitogen-activated protein kinases (MAPKs) such as MAPK1, MAPK3 and MAPK14 in the cytoplasm in an inactive form. The MAPKs bind to a dephosphorylated kinase interacting motif, phosphorylation of which by the protein kinase A complex releases the MAPKs for activation and translocation into the nucleus. Isoform gamma may have a role in patterning and cellular proliferation of skeletal elements in the precartilaginous/cartilaginous skeleton. The protein is Receptor-type tyrosine-protein phosphatase R (Ptprr) of Mus musculus (Mouse).